Consider the following 342-residue polypeptide: Glycerol-1-phosphate dehydrogenase [NAD(P)+] (342 aa).

Residues 84 to 88 and 106 to 109 contribute to the NAD(+) site; these read GRPID and TSAS. Asp111 contributes to the substrate binding site. Ser115 provides a ligand contact to NAD(+). Asp160 is a binding site for substrate. Zn(2+) is bound by residues Asp160 and His241. His245 serves as a coordination point for substrate. Residue His260 participates in Zn(2+) binding.

This sequence belongs to the glycerol-1-phosphate dehydrogenase family. As to quaternary structure, homodimer. Zn(2+) serves as cofactor.

The protein resides in the cytoplasm. It carries out the reaction sn-glycerol 1-phosphate + NAD(+) = dihydroxyacetone phosphate + NADH + H(+). It catalyses the reaction sn-glycerol 1-phosphate + NADP(+) = dihydroxyacetone phosphate + NADPH + H(+). It participates in membrane lipid metabolism; glycerophospholipid metabolism. In terms of biological role, catalyzes the NAD(P)H-dependent reduction of dihydroxyacetonephosphate (DHAP or glycerone phosphate) to glycerol 1-phosphate (G1P). The G1P thus generated is used as the glycerophosphate backbone of phospholipids in the cellular membranes of Archaea. This Pyrobaculum islandicum (strain DSM 4184 / JCM 9189 / GEO3) protein is Glycerol-1-phosphate dehydrogenase [NAD(P)+].